The chain runs to 652 residues: Engulfment and cell motility protein 3 (652 aa).

Residues 307–479 (EQREQLQALR…VVREQLARTL (173 aa)) enclose the ELMO domain.

As to quaternary structure, probably interacts directly with the SH3-domain of DOCK1 via its SH3-binding site. Part of a complex with DOCK1 and RAC1. Interacts with ADGRB3.

Its subcellular location is the cytoplasm. Functionally, involved in cytoskeletal rearrangements required for phagocytosis of apoptotic cells and cell motility. Acts in association with DOCK1 and CRK. Was initially proposed to be required in complex with DOCK1 to activate Rac Rho small GTPases. May enhance the guanine nucleotide exchange factor (GEF) activity of DOCK1. This Bos taurus (Bovine) protein is Engulfment and cell motility protein 3 (ELMO3).